The primary structure comprises 229 residues: UPF0173 metal-dependent hydrolase RD1_1994 (229 aa).

Belongs to the UPF0173 family.

The sequence is that of UPF0173 metal-dependent hydrolase RD1_1994 from Roseobacter denitrificans (strain ATCC 33942 / OCh 114) (Erythrobacter sp. (strain OCh 114)).